The chain runs to 266 residues: MPDITLTTLQSLKQKGEKITMLTCYDATFAHTCCEAGVEVLLVGDSLGMVLQGHDSTLPVSTADMAYHVAAVKRGNNGALILADLPFMSYATTEQALSSSAQLMQAGAHMLKIEGAAWLAEPVRLLNERGVPVCVHMGLTPQTVNVLGGYKVQGRNESQARQMRADAIALEQAGAAMLLLECVPSELAAEITQAVKIPVIGIGAGNATDGQVLVLHDMLGLSLSGRSPKFVKNFMAGKDSIQAALSAYVEEVKAVTFPGAEHGFSA.

Residues Asp-45 and Asp-84 each contribute to the Mg(2+) site. 3-methyl-2-oxobutanoate is bound by residues 45–46 (DS), Asp-84, and Lys-112. A Mg(2+)-binding site is contributed by Glu-114. Glu-181 (proton acceptor) is an active-site residue.

It belongs to the PanB family. As to quaternary structure, homodecamer; pentamer of dimers. It depends on Mg(2+) as a cofactor.

Its subcellular location is the cytoplasm. The catalysed reaction is 3-methyl-2-oxobutanoate + (6R)-5,10-methylene-5,6,7,8-tetrahydrofolate + H2O = 2-dehydropantoate + (6S)-5,6,7,8-tetrahydrofolate. It functions in the pathway cofactor biosynthesis; (R)-pantothenate biosynthesis; (R)-pantoate from 3-methyl-2-oxobutanoate: step 1/2. Catalyzes the reversible reaction in which hydroxymethyl group from 5,10-methylenetetrahydrofolate is transferred onto alpha-ketoisovalerate to form ketopantoate. The polypeptide is 3-methyl-2-oxobutanoate hydroxymethyltransferase 2 (Pseudomonas fluorescens (strain ATCC BAA-477 / NRRL B-23932 / Pf-5)).